Here is a 261-residue protein sequence, read N- to C-terminus: Zinc import ATP-binding protein ZnuC (261 aa).

Residues 6 to 221 (IRLEQVGVTF…PAFVELFGKN (216 aa)) enclose the ABC transporter domain. 38–45 (GPNGAGKT) lines the ATP pocket.

It belongs to the ABC transporter superfamily. Zinc importer (TC 3.A.1.15.5) family. The complex is composed of two ATP-binding proteins (ZnuC), two transmembrane proteins (ZnuB) and a solute-binding protein (ZnuA).

Its subcellular location is the cell inner membrane. It catalyses the reaction Zn(2+)(out) + ATP(in) + H2O(in) = Zn(2+)(in) + ADP(in) + phosphate(in) + H(+)(in). Functionally, part of the ABC transporter complex ZnuABC involved in zinc import. Responsible for energy coupling to the transport system. This chain is Zinc import ATP-binding protein ZnuC, found in Pseudomonas fluorescens (strain ATCC BAA-477 / NRRL B-23932 / Pf-5).